The chain runs to 482 residues: tRNA sulfurtransferase (482 aa).

The region spanning 61-165 is the THUMP domain; sequence AEVLEILTHT…GDKLNQVLAR (105 aa). Residues 183–184, K265, G287, and Q296 each bind ATP; that span reads LI. A disulfide bridge connects residues C344 and C456. A Rhodanese domain is found at 404-482; sequence VEEHAVVLDI…GFNNVKVYRP (79 aa). The Cysteine persulfide intermediate role is filled by C456.

This sequence belongs to the ThiI family.

Its subcellular location is the cytoplasm. The catalysed reaction is [ThiI sulfur-carrier protein]-S-sulfanyl-L-cysteine + a uridine in tRNA + 2 reduced [2Fe-2S]-[ferredoxin] + ATP + H(+) = [ThiI sulfur-carrier protein]-L-cysteine + a 4-thiouridine in tRNA + 2 oxidized [2Fe-2S]-[ferredoxin] + AMP + diphosphate. It carries out the reaction [ThiS sulfur-carrier protein]-C-terminal Gly-Gly-AMP + S-sulfanyl-L-cysteinyl-[cysteine desulfurase] + AH2 = [ThiS sulfur-carrier protein]-C-terminal-Gly-aminoethanethioate + L-cysteinyl-[cysteine desulfurase] + A + AMP + 2 H(+). The protein operates within cofactor biosynthesis; thiamine diphosphate biosynthesis. In terms of biological role, catalyzes the ATP-dependent transfer of a sulfur to tRNA to produce 4-thiouridine in position 8 of tRNAs, which functions as a near-UV photosensor. Also catalyzes the transfer of sulfur to the sulfur carrier protein ThiS, forming ThiS-thiocarboxylate. This is a step in the synthesis of thiazole, in the thiamine biosynthesis pathway. The sulfur is donated as persulfide by IscS. The chain is tRNA sulfurtransferase from Vibrio parahaemolyticus serotype O3:K6 (strain RIMD 2210633).